Reading from the N-terminus, the 168-residue chain is MQMKFRGRVWKFGDNVDTDQIIPARYLNTSDPYELAKHVMEDSEHPEFAKEHKEGDIIVAGKNFGSGSSREHAPIAIKYSGVPVVIAKSFARIFFRNAINIGLPIVEAPEAVDEIEHGDEIEVDLEKGVIKNLRTGKEYQATKFPKELQDILKAGGLMAYAKEKLASK.

It belongs to the LeuD family. LeuD type 2 subfamily. In terms of assembly, heterodimer of LeuC and LeuD.

The enzyme catalyses (2R,3S)-3-isopropylmalate = (2S)-2-isopropylmalate. It functions in the pathway amino-acid biosynthesis; L-leucine biosynthesis; L-leucine from 3-methyl-2-oxobutanoate: step 2/4. In terms of biological role, catalyzes the isomerization between 2-isopropylmalate and 3-isopropylmalate, via the formation of 2-isopropylmaleate. This is 3-isopropylmalate dehydratase small subunit (leuD) from Aquifex aeolicus (strain VF5).